Reading from the N-terminus, the 87-residue chain is Small ribosomal subunit protein uS17 (87 aa).

Belongs to the universal ribosomal protein uS17 family. Part of the 30S ribosomal subunit.

Functionally, one of the primary rRNA binding proteins, it binds specifically to the 5'-end of 16S ribosomal RNA. This chain is Small ribosomal subunit protein uS17, found in Heliobacterium modesticaldum (strain ATCC 51547 / Ice1).